Consider the following 866-residue polypeptide: Dimethylglycine dehydrogenase, mitochondrial (866 aa).

The N-terminal 50 residues, 1–50 (MLRPGAQLLRGLLLRSCPLQGSPGRPRSVCGREGEEKPPLSAETQWKDRA), are a transit peptide targeting the mitochondrion. The interval 20–42 (QGSPGRPRSVCGREGEEKPPLSA) is disordered. FAD is bound by residues 59-60 (CV), 80-81 (EK), and 87-95 (GSTWHAAGL). Tele-8alpha-FAD histidine is present on histidine 91. N6-acetyllysine is present on lysine 114. Lysine 148 carries the N6-acetyllysine; alternate modification. N6-succinyllysine; alternate is present on lysine 148. Lysine 168 is modified (N6-acetyllysine). Valine 219 contacts FAD. An N6-acetyllysine modification is found at lysine 223. Residue tryptophan 251 coordinates FAD. 2 positions are modified to N6-succinyllysine: lysine 317 and lysine 319. Lysine 335 and lysine 360 each carry N6-acetyllysine. 397–402 (FGYGII) serves as a coordination point for FAD. Lysine 434 and lysine 523 each carry N6-acetyllysine; alternate. N6-succinyllysine; alternate is present on residues lysine 434 and lysine 523. (6S)-5,6,7,8-tetrahydrofolate is bound at residue 580–582 (ELT). Lysine 655 is subject to N6-acetyllysine; alternate. At lysine 655 the chain carries N6-succinyllysine; alternate. Residues tyrosine 676, 683-685 (ELY), and tyrosine 744 each bind (6S)-5,6,7,8-tetrahydrofolate. An N6-acetyllysine modification is found at lysine 764. N6-succinyllysine is present on lysine 795.

Belongs to the GcvT family. Monomer. FAD is required as a cofactor.

It localises to the mitochondrion. It catalyses the reaction (6S)-5,6,7,8-tetrahydrofolyl-(gamma-L-Glu)(n) + N,N-dimethylglycine + oxidized [electron-transfer flavoprotein] + H(+) = (6R)-5,10-methylenetetrahydrofolyl-(gamma-L-Glu)(n) + sarcosine + reduced [electron-transfer flavoprotein]. It participates in amine and polyamine degradation; betaine degradation; sarcosine from betaine: step 2/2. Catalyzes the demethylation of N,N-dimethylglycine to sarcosine. Also has activity with sarcosine in vitro. The polypeptide is Dimethylglycine dehydrogenase, mitochondrial (DMGDH) (Homo sapiens (Human)).